The following is a 246-amino-acid chain: TLC domain-containing protein 2 (246 aa).

6 helical membrane passes run 5–25, 43–63, 79–99, 107–127, 128–148, and 199–219; these read SVIL…YGLG, ISTS…CFCM, SHAL…DMVI, WELL…VLTC, RYVG…FLHL, and FSYT…IVLF. One can recognise a TLC domain in the interval 35–231; that stretch reads RNAWKWNNIS…LMRSDFMKAS (197 aa).

The protein belongs to the TLCD family.

The protein resides in the cell membrane. In terms of biological role, regulates the composition and fluidity of the plasma membrane. Inhibits the incorporation of membrane-fluidizing phospholipids containing omega-3 long-chain polyunsaturated fatty acids (LCPUFA) and thereby promotes membrane rigidity. Does not appear to have any effect on LCPUFA synthesis. The polypeptide is TLC domain-containing protein 2 (tlcd2) (Danio rerio (Zebrafish)).